The sequence spans 400 residues: Tryptophan synthase beta chain (400 aa).

Position 92 is an N6-(pyridoxal phosphate)lysine (Lys92).

It belongs to the TrpB family. Tetramer of two alpha and two beta chains. The cofactor is pyridoxal 5'-phosphate.

It carries out the reaction (1S,2R)-1-C-(indol-3-yl)glycerol 3-phosphate + L-serine = D-glyceraldehyde 3-phosphate + L-tryptophan + H2O. The protein operates within amino-acid biosynthesis; L-tryptophan biosynthesis; L-tryptophan from chorismate: step 5/5. The beta subunit is responsible for the synthesis of L-tryptophan from indole and L-serine. In Neisseria meningitidis serogroup C (strain 053442), this protein is Tryptophan synthase beta chain.